We begin with the raw amino-acid sequence, 306 residues long: UDP-3-O-acyl-N-acetylglucosamine deacetylase (306 aa).

Zn(2+)-binding residues include H79, H239, and D243. The active-site Proton donor is the H266.

Belongs to the LpxC family. Zn(2+) is required as a cofactor.

It carries out the reaction a UDP-3-O-[(3R)-3-hydroxyacyl]-N-acetyl-alpha-D-glucosamine + H2O = a UDP-3-O-[(3R)-3-hydroxyacyl]-alpha-D-glucosamine + acetate. The protein operates within glycolipid biosynthesis; lipid IV(A) biosynthesis; lipid IV(A) from (3R)-3-hydroxytetradecanoyl-[acyl-carrier-protein] and UDP-N-acetyl-alpha-D-glucosamine: step 2/6. In terms of biological role, catalyzes the hydrolysis of UDP-3-O-myristoyl-N-acetylglucosamine to form UDP-3-O-myristoylglucosamine and acetate, the committed step in lipid A biosynthesis. The polypeptide is UDP-3-O-acyl-N-acetylglucosamine deacetylase (Actinobacillus pleuropneumoniae serotype 7 (strain AP76)).